Here is a 432-residue protein sequence, read N- to C-terminus: GTPase HflX (432 aa).

In terms of domain architecture, Hflx-type G spans 202-367 (FTVALVGYTN…ELRRAVGRAM (166 aa)). GTP is bound by residues 208–215 (GYTNAGKS), 233–237 (FATLD), 255–258 (DTVG), 321–324 (NKID), and 345–347 (SAQ). Mg(2+) is bound by residues S215 and T235.

This sequence belongs to the TRAFAC class OBG-HflX-like GTPase superfamily. HflX GTPase family. Monomer. Associates with the 50S ribosomal subunit. The cofactor is Mg(2+).

The protein resides in the cytoplasm. Functionally, GTPase that associates with the 50S ribosomal subunit and may have a role during protein synthesis or ribosome biogenesis. The chain is GTPase HflX from Magnetococcus marinus (strain ATCC BAA-1437 / JCM 17883 / MC-1).